A 340-amino-acid polypeptide reads, in one-letter code: Beta-1,3-N-acetylglucosaminyltransferase radical fringe (340 aa).

At 1–4 the chain is on the cytoplasmic side; the sequence is MKIT. The helical; Signal-anchor for type II membrane protein transmembrane segment at 5-25 threads the bilayer; that stretch reads YVGLIKVCFLVFLLLCATVLL. Over 26 to 340 the chain is Lumenal; it reads NISWRQRDSS…AFSLAEDPTR (315 aa). Asn42 carries N-linked (GlcNAc...) asparagine glycosylation. Arg110 lines the substrate pocket. N-linked (GlcNAc...) asparagine glycosylation occurs at Asn149. Disulfide bonds link Cys150–Cys161 and Cys179–Cys242. Asp183 is a binding site for substrate. Asp184 contacts Mn(2+). Asp272 is a catalytic residue. A Mn(2+)-binding site is contributed by His296.

It belongs to the glycosyltransferase 31 family. It depends on Mn(2+) as a cofactor.

It is found in the golgi apparatus membrane. It carries out the reaction 3-O-(alpha-L-fucosyl)-L-threonyl-[EGF-like domain protein] + UDP-N-acetyl-alpha-D-glucosamine = 3-O-(N-acetyl-beta-D-glucosaminyl-(1-&gt;3)-alpha-L-fucosyl)-L-threonyl-[EGF-like domain protein] + UDP + H(+). The enzyme catalyses 3-O-(alpha-L-fucosyl)-L-seryl-[EGF-like domain protein] + UDP-N-acetyl-alpha-D-glucosamine = 3-O-(N-acetyl-beta-D-glucosaminyl-(1-&gt;3)-alpha-L-fucosyl)-L-seryl-[EGF-like domain protein] + UDP + H(+). Functionally, glycosyltransferase that initiates the elongation of O-linked fucose residues attached to EGF-like repeats in the extracellular domain of Notch molecules. In Xenopus laevis (African clawed frog), this protein is Beta-1,3-N-acetylglucosaminyltransferase radical fringe (rfng).